Consider the following 349-residue polypeptide: Gibberellin 3-beta-dioxygenase 3 (349 aa).

In terms of domain architecture, Fe2OG dioxygenase spans 201 to 305 (SIQSFLQLNS…RVSAAYFAGP (105 aa)). Residues His-226, Asp-228, and His-286 each contribute to the Fe cation site. Arg-296 is a catalytic residue.

It belongs to the iron/ascorbate-dependent oxidoreductase family. GA3OX subfamily. L-ascorbate is required as a cofactor. Requires Fe cation as cofactor. In terms of tissue distribution, expressed in flower clusters and siliques.

It carries out the reaction gibberellin A20 + 2-oxoglutarate + O2 = gibberellin A1 + succinate + CO2. It functions in the pathway plant hormone biosynthesis; gibberellin biosynthesis. Functionally, converts the inactive gibberellin (GA) precursors GA9 and GA20 in the bioactives gibberellins GA4 and GA1. Involved in the production of bioactive GA for reproductive development. The sequence is that of Gibberellin 3-beta-dioxygenase 3 (GA3OX3) from Arabidopsis thaliana (Mouse-ear cress).